The chain runs to 442 residues: SPRY domain-containing protein 3 (442 aa).

Residues 17 to 204 (DLNLHYRFLN…VRLHLNAELG (188 aa)) form the B30.2/SPRY domain. The interval 371-394 (EGEEEEEEEEEEEDGEEIEPEHEG) is disordered. Over residues 372 to 390 (GEEEEEEEEEEEDGEEIEP) the composition is skewed to acidic residues.

In Pongo abelii (Sumatran orangutan), this protein is SPRY domain-containing protein 3 (SPRYD3).